The sequence spans 590 residues: Transcription factor bHLH13 (590 aa).

Disordered regions lie at residues 274-296 (LQHHQHHQQQQQQPPQQQQHRQF) and 385-439 (AASS…EAER). Over residues 281-293 (QQQQQQPPQQQQH) the composition is skewed to low complexity. The span at 416–425 (RPRKRGRRPA) shows a compositional bias: basic residues. The bHLH domain maps to 429-478 (AEALNHVEAERQRREKLNQRFYALRSVVPNISKMDKASLLGDAVSYINEL).

As to quaternary structure, homodimer.

The protein resides in the nucleus. The chain is Transcription factor bHLH13 (BHLH13) from Arabidopsis thaliana (Mouse-ear cress).